A 432-amino-acid chain; its full sequence is D-amino acid dehydrogenase 1 (432 aa).

Position 3–17 (valine 3–tyrosine 17) interacts with FAD. The segment at glycine 410 to histidine 432 is disordered.

The protein belongs to the DadA oxidoreductase family. The cofactor is FAD.

It carries out the reaction a D-alpha-amino acid + A + H2O = a 2-oxocarboxylate + AH2 + NH4(+). It participates in amino-acid degradation; D-alanine degradation; NH(3) and pyruvate from D-alanine: step 1/1. Functionally, catalyzes the oxidative deamination of D-amino acids. Has very broad substrate specificity; all the D-amino acids tested can be used as the substrate except D-Glu and D-Gln. Participates in the utilization of several D-amino acids as the sole source of nitrogen, i.e. D-alanine, D-histidine, D-phenylalanine, D-serine, D-threonine, and D-valine. This Pseudomonas aeruginosa (strain ATCC 15692 / DSM 22644 / CIP 104116 / JCM 14847 / LMG 12228 / 1C / PRS 101 / PAO1) protein is D-amino acid dehydrogenase 1 (dadA1).